The following is a 461-amino-acid chain: Cysteine--tRNA ligase (461 aa).

Cys-28 serves as a coordination point for Zn(2+). Residues 30-40 (ITVYDLCHIGH) carry the 'HIGH' region motif. Cys-209, His-234, and Glu-238 together coordinate Zn(2+). A 'KMSKS' region motif is present at residues 266 to 270 (KMSKS). An ATP-binding site is contributed by Lys-269.

The protein belongs to the class-I aminoacyl-tRNA synthetase family. In terms of assembly, monomer. It depends on Zn(2+) as a cofactor.

Its subcellular location is the cytoplasm. The catalysed reaction is tRNA(Cys) + L-cysteine + ATP = L-cysteinyl-tRNA(Cys) + AMP + diphosphate. The protein is Cysteine--tRNA ligase of Escherichia coli (strain SMS-3-5 / SECEC).